Here is a 339-residue protein sequence, read N- to C-terminus: MRNPGGPGWASKRPLQKKQNTACLCAQQPARHFVPAPFNSSRQGKNTAQPTEPSLSSVIAPTLFCAFLYLACVTAELPEVSRRMATSGVRSKEGRREHAFVPEPFTGTNLAPSLWLHRFEVIDDLNHWDHATKLRFLKESLKGDALDVYNGLSSQAQGDFSFVKQALLRAFGAPGEAFSEPEEILFANSMGKGYYLKGKVGHVPVRFLVDSGAQVSVVHPALWEEVTDGDLDTLRPFNNVVKVANGAEMKILGVWDTEISLGKTKLKAEFLVANASAEEAIIGTDVLQDHNAVLDFEHRTCTLKGKKFRLLPVGSSLEDEFDLELIEEEEGSSAPEGSH.

The propeptide occupies 1–188 (MRNPGGPGWA…SEPEEILFAN (188 aa)). The segment at 34–53 (VPAPFNSSRQGKNTAQPTEP) is disordered. The segment covering 38-53 (FNSSRQGKNTAQPTEP) has biased composition (polar residues). A glycan (N-linked (GlcNAc...) asparagine) is linked at Asn-39. A helical membrane pass occupies residues 55 to 75 (LSSVIAPTLFCAFLYLACVTA). Residues 205–286 (VRFLVDSGAQ…AEEAIIGTDV (82 aa)) enclose the Peptidase A2 domain. Residue Asp-210 is part of the active site. Residue Asn-274 is glycosylated (N-linked (GlcNAc...) asparagine). The propeptide occupies 325-339 (LIEEEEGSSAPEGSH).

As to quaternary structure, homodimer. In terms of processing, undergoes autocleavage which is necessary for activation of the protein. In terms of tissue distribution, highly expressed in stratified epithelia in skin, tongue, esophagus, forestomach and vagina. Also expressed in trachea, urinary bladder and thymus. Undetectable in simple epithelia. Within the epidermis, expressed exclusively in the granular layer (at protein level). Levels are elevated in benign skin tumors but are down-regulated in squamous cell carcinomas.

Its subcellular location is the membrane. In terms of biological role, protease responsible for filaggrin processing, essential for the maintenance of a proper epidermis organization. This chain is Retroviral-like aspartic protease 1, found in Mus musculus (Mouse).